Here is a 449-residue protein sequence, read N- to C-terminus: Tryptophan--tRNA ligase (449 aa).

ATP contacts are provided by residues 10 to 12 (TTT) and 18 to 19 (GN). The short motif at 11 to 19 (TTGTPHLGN) is the 'HIGH' region element. Asp-143 serves as a coordination point for L-tryptophan. ATP is bound by residues 155 to 157 (GRD), Leu-197, and 204 to 208 (KMSKS). Positions 204-208 (KMSKS) match the 'KMSKS' region motif.

The protein belongs to the class-I aminoacyl-tRNA synthetase family. As to quaternary structure, homodimer.

It is found in the cytoplasm. It carries out the reaction tRNA(Trp) + L-tryptophan + ATP = L-tryptophyl-tRNA(Trp) + AMP + diphosphate + H(+). Catalyzes the attachment of tryptophan to tRNA(Trp). This is Tryptophan--tRNA ligase from Pseudomonas putida (strain ATCC 47054 / DSM 6125 / CFBP 8728 / NCIMB 11950 / KT2440).